A 248-amino-acid polypeptide reads, in one-letter code: NAD(P)H-quinone oxidoreductase subunit K 1 (248 aa).

Residues 1-2 (MS) constitute a propeptide that is removed on maturation. [4Fe-4S] cluster is bound by residues cysteine 62, cysteine 63, cysteine 127, and cysteine 158. The segment at 228–248 (MGMPVPPALTTSQQKEQLNRG) is disordered. Polar residues predominate over residues 236 to 248 (LTTSQQKEQLNRG).

Belongs to the complex I 20 kDa subunit family. NDH-1 can be composed of about 15 different subunits; different subcomplexes with different compositions have been identified which probably have different functions. [4Fe-4S] cluster is required as a cofactor.

The protein resides in the cellular thylakoid membrane. The enzyme catalyses a plastoquinone + NADH + (n+1) H(+)(in) = a plastoquinol + NAD(+) + n H(+)(out). It carries out the reaction a plastoquinone + NADPH + (n+1) H(+)(in) = a plastoquinol + NADP(+) + n H(+)(out). NDH-1 shuttles electrons from an unknown electron donor, via FMN and iron-sulfur (Fe-S) centers, to quinones in the respiratory and/or the photosynthetic chain. The immediate electron acceptor for the enzyme in this species is believed to be plastoquinone. Couples the redox reaction to proton translocation, and thus conserves the redox energy in a proton gradient. Cyanobacterial NDH-1 also plays a role in inorganic carbon-concentration. This Synechocystis sp. (strain ATCC 27184 / PCC 6803 / Kazusa) protein is NAD(P)H-quinone oxidoreductase subunit K 1.